Reading from the N-terminus, the 206-residue chain is Dephospho-CoA kinase (206 aa).

The region spanning 4-200 is the DPCK domain; that stretch reads TVALTGGIGS…ASYLKLASQF (197 aa). 12 to 17 provides a ligand contact to ATP; that stretch reads GSGKST.

This sequence belongs to the CoaE family.

Its subcellular location is the cytoplasm. The enzyme catalyses 3'-dephospho-CoA + ATP = ADP + CoA + H(+). Its pathway is cofactor biosynthesis; coenzyme A biosynthesis; CoA from (R)-pantothenate: step 5/5. Functionally, catalyzes the phosphorylation of the 3'-hydroxyl group of dephosphocoenzyme A to form coenzyme A. The polypeptide is Dephospho-CoA kinase (Salmonella typhimurium (strain LT2 / SGSC1412 / ATCC 700720)).